Reading from the N-terminus, the 647-residue chain is Sialidase (647 aa).

Residues 1–37 form the signal peptide; sequence MTANPYLRRLPRRRAVSFLLAPALAAATVAGASPAQA. Arg-68 lines the substrate pocket. The Proton acceptor role is filled by Asp-92. BNR repeat units follow at residues 102-113, 175-186, and 239-250; these read RRSTDGGRTWGE, ATSTDGGLTWSH, and VYSDDHGRTWRA. The active-site Nucleophile is the Glu-260. Arg-276 serves as a coordination point for substrate. BNR repeat units follow at residues 287 to 298 and 348 to 359; these read AVSTDGGHSYGP and RMSCDDGQTWPV. The active-site Nucleophile is Tyr-370. Residues 496–646 enclose the F5/8 type C domain; that stretch reads TFTVTVGLLD…AVAELEVEGQ (151 aa).

This sequence belongs to the glycosyl hydrolase 33 family.

It localises to the secreted. The catalysed reaction is Hydrolysis of alpha-(2-&gt;3)-, alpha-(2-&gt;6)-, alpha-(2-&gt;8)- glycosidic linkages of terminal sialic acid residues in oligosaccharides, glycoproteins, glycolipids, colominic acid and synthetic substrates.. Functionally, to release sialic acids for use as carbon and energy sources for this non-pathogenic bacterium while in pathogenic microorganisms, sialidases have been suggested to be pathogenic factors. In Micromonospora viridifaciens, this protein is Sialidase (nedA).